We begin with the raw amino-acid sequence, 139 residues long: Transcription antitermination protein NusB (139 aa).

This sequence belongs to the NusB family.

Its function is as follows. Involved in transcription antitermination. Required for transcription of ribosomal RNA (rRNA) genes. Binds specifically to the boxA antiterminator sequence of the ribosomal RNA (rrn) operons. The protein is Transcription antitermination protein NusB of Idiomarina loihiensis (strain ATCC BAA-735 / DSM 15497 / L2-TR).